The sequence spans 913 residues: Bifunctional uridylyltransferase/uridylyl-removing enzyme (913 aa).

A uridylyltransferase region spans residues Met-1–Pro-358. Residues Ile-359–Val-729 form a uridylyl-removing region. The HD domain maps to Val-476 to Val-592. ACT domains lie at Gln-730–Arg-815 and Ile-838–Val-913.

Belongs to the GlnD family. Mg(2+) is required as a cofactor.

It carries out the reaction [protein-PII]-L-tyrosine + UTP = [protein-PII]-uridylyl-L-tyrosine + diphosphate. The enzyme catalyses [protein-PII]-uridylyl-L-tyrosine + H2O = [protein-PII]-L-tyrosine + UMP + H(+). With respect to regulation, uridylyltransferase (UTase) activity is inhibited by glutamine, while glutamine activates uridylyl-removing (UR) activity. In terms of biological role, modifies, by uridylylation and deuridylylation, the PII regulatory proteins (GlnB and homologs), in response to the nitrogen status of the cell that GlnD senses through the glutamine level. Under low glutamine levels, catalyzes the conversion of the PII proteins and UTP to PII-UMP and PPi, while under higher glutamine levels, GlnD hydrolyzes PII-UMP to PII and UMP (deuridylylation). Thus, controls uridylylation state and activity of the PII proteins, and plays an important role in the regulation of nitrogen assimilation and metabolism. This chain is Bifunctional uridylyltransferase/uridylyl-removing enzyme, found in Psychrobacter cryohalolentis (strain ATCC BAA-1226 / DSM 17306 / VKM B-2378 / K5).